Reading from the N-terminus, the 724-residue chain is Hyperosmolality-gated Ca2+ permeable channel 3.1 (724 aa).

The Extracellular portion of the chain corresponds to M1 to G4. The chain crosses the membrane as a helical span at residues S5–T25. The Cytoplasmic portion of the chain corresponds to W26–F85. The helical transmembrane segment at V86–P108 threads the bilayer. Residues L109 to S147 lie on the Extracellular side of the membrane. Residues R148–A170 form a helical membrane-spanning segment. Residues Y171 to S358 lie on the Cytoplasmic side of the membrane. A coiled-coil region spans residues E241 to T309. Residues R359–S385 form a helical membrane-spanning segment. The Extracellular segment spans residues A386–T411. The chain crosses the membrane as a helical span at residues V412 to A439. The Cytoplasmic segment spans residues E440–A448. Residues I449–G472 form a helical membrane-spanning segment. The Extracellular portion of the chain corresponds to T473–S497. A helical transmembrane segment spans residues L498–I529. Over F530–S554 the chain is Cytoplasmic. Residues Y555–V574 traverse the membrane as a helical segment. Residue I575 is a topological domain, extracellular. A helical transmembrane segment spans residues A576–L594. The Cytoplasmic segment spans residues R595 to M612. A helical transmembrane segment spans residues W613–G636. At A637 to F641 the chain is on the extracellular side. A helical transmembrane segment spans residues Y642–Q662. Over K663–V724 the chain is Cytoplasmic.

This sequence belongs to the CSC1 (TC 1.A.17) family. As to quaternary structure, homodimer.

It is found in the membrane. Acts as a hyperosmolarity-gated non-selective cation channel that permeates Ca(2+) ions. Mechanosensitive ion channel that converts mechanical stimuli into a flow of ions: activated in response to membrane stretch. Not activated in response to membrane poke. The chain is Hyperosmolality-gated Ca2+ permeable channel 3.1 from Arabidopsis thaliana (Mouse-ear cress).